A 143-amino-acid chain; its full sequence is Large ribosomal subunit protein uL11 (143 aa).

This sequence belongs to the universal ribosomal protein uL11 family. As to quaternary structure, part of the ribosomal stalk of the 50S ribosomal subunit. Interacts with L10 and the large rRNA to form the base of the stalk. L10 forms an elongated spine to which L12 dimers bind in a sequential fashion forming a multimeric L10(L12)X complex. One or more lysine residues are methylated.

In terms of biological role, forms part of the ribosomal stalk which helps the ribosome interact with GTP-bound translation factors. This is Large ribosomal subunit protein uL11 from Cutibacterium acnes (strain DSM 16379 / KPA171202) (Propionibacterium acnes).